A 217-amino-acid polypeptide reads, in one-letter code: Ribonuclease HII (217 aa).

The 191-residue stretch at 25 to 215 folds into the RNase H type-2 domain; that stretch reads KLIAGVDESG…VKHVISDINR (191 aa). Positions 31, 32, and 123 each coordinate a divalent metal cation.

The protein belongs to the RNase HII family. It depends on Mn(2+) as a cofactor. Requires Mg(2+) as cofactor.

It is found in the cytoplasm. It carries out the reaction Endonucleolytic cleavage to 5'-phosphomonoester.. In terms of biological role, endonuclease that specifically degrades the RNA of RNA-DNA hybrids. The polypeptide is Ribonuclease HII (Blochmanniella pennsylvanica (strain BPEN)).